Reading from the N-terminus, the 671-residue chain is DNA ligase (671 aa).

NAD(+)-binding positions include 32 to 36, 81 to 82, and Glu113; these read DAEYD and SL. Lys115 acts as the N6-AMP-lysine intermediate in catalysis. NAD(+) is bound by residues Arg136, Glu173, Lys290, and Lys314. Residues Cys408, Cys411, Cys426, and Cys432 each coordinate Zn(2+). The BRCT domain maps to 593–671; it reads EIDSPFAGKT…EAEMLRLLGV (79 aa).

This sequence belongs to the NAD-dependent DNA ligase family. LigA subfamily. Mg(2+) serves as cofactor. It depends on Mn(2+) as a cofactor.

It carries out the reaction NAD(+) + (deoxyribonucleotide)n-3'-hydroxyl + 5'-phospho-(deoxyribonucleotide)m = (deoxyribonucleotide)n+m + AMP + beta-nicotinamide D-nucleotide.. Its function is as follows. DNA ligase that catalyzes the formation of phosphodiester linkages between 5'-phosphoryl and 3'-hydroxyl groups in double-stranded DNA using NAD as a coenzyme and as the energy source for the reaction. It is essential for DNA replication and repair of damaged DNA. The sequence is that of DNA ligase from Salmonella arizonae (strain ATCC BAA-731 / CDC346-86 / RSK2980).